A 319-amino-acid chain; its full sequence is MEQPLCILGIETTCDDTSIGVITESKVQAHIVLSSAKLHAQTGGVVPEVAARSHEQNLLKALQQSGVVLEQITHIAYAANPGLPGCLHVGATFARSLSFLLDKPLLPINHLYAHIFSALIDQDINQLKLPALGLVVSGGHTAIYLIKSLFDLELIAETSDDAIGEVYDKVGRAMGFPYPAGPQLDSLFQPELVKSHYFFRPSTKWTKFSYSGLKSQCFTKIKQLRERKGFNPQTHDWNEFASNFQATIIDHYINHVKDAIQQHQPQMLLLGGGVSANKYLREQVTQLQLPYLIAPLKYTSDNGAMIGFYANLLINGKNN.

Histidine 110 and histidine 114 together coordinate Fe cation. Residues 135–139, aspartate 168, glycine 181, aspartate 185, and asparagine 277 contribute to the substrate site; that span reads VVSGG. Aspartate 301 provides a ligand contact to Fe cation.

This sequence belongs to the KAE1 / TsaD family. It depends on Fe(2+) as a cofactor.

It localises to the cytoplasm. It catalyses the reaction L-threonylcarbamoyladenylate + adenosine(37) in tRNA = N(6)-L-threonylcarbamoyladenosine(37) in tRNA + AMP + H(+). Required for the formation of a threonylcarbamoyl group on adenosine at position 37 (t(6)A37) in tRNAs that read codons beginning with adenine. Is involved in the transfer of the threonylcarbamoyl moiety of threonylcarbamoyl-AMP (TC-AMP) to the N6 group of A37, together with TsaE and TsaB. TsaD likely plays a direct catalytic role in this reaction. This Mycoplasma pneumoniae (strain ATCC 29342 / M129 / Subtype 1) (Mycoplasmoides pneumoniae) protein is tRNA N6-adenosine threonylcarbamoyltransferase.